Here is a 714-residue protein sequence, read N- to C-terminus: EtfAB:quinone oxidoreductase (714 aa).

The next 6 helical transmembrane spans lie at 25–45 (YEWLIYVIMLIPVSVFLFGFW), 87–107 (AGWMHAFLFWGFLVLFLAAGI), 125–145 (IGFSWVVDVLGFLALIGVMVL), 164–184 (DGWIILLIFAILLTGYFIEGL), 207–227 (PFGWMFASFFGSMSVDAMLMW), and 236–256 (MAIAFLFIALVPFTKLWHIFA). 2 4Fe-4S ferredoxin-type domains span residues 293–324 (WKDLLDLDSCIRCGRCQENCPAYNTGKHLNPK) and 375–405 (YDVVGSETIWDCTNCRACMEHCPMFIEHIPK). Cys-302, Cys-305, Cys-308, Cys-312, Cys-386, Cys-389, Cys-392, and Cys-396 together coordinate [4Fe-4S] cluster.

As to quaternary structure, might constitute a membrane-associated complex with EtfA (Swol_0697), EtfB (Swol_0696), and the butyryl-CoA dehydrogenase Swol_1933 and/or Swol_2052. [4Fe-4S] cluster is required as a cofactor.

It localises to the cell membrane. It functions in the pathway lipid metabolism; butanoate metabolism. Functionally, oxidoreductase involved in syntrophic growth of S.wolfei with butyrate. Is presumed to link the electron flow from butyryl-CoA dehydrogenases to the membrane, in conjunction with the electron transfer flavoprotein EtfAB. May transfer electrons to the menaquinone pool of the membrane. The polypeptide is EtfAB:quinone oxidoreductase (Syntrophomonas wolfei subsp. wolfei (strain DSM 2245B / Goettingen)).